Reading from the N-terminus, the 417-residue chain is Serpin H1 (417 aa).

A signal peptide spans M1 to A18. K94 carries the post-translational modification N6-succinyllysine. N-linked (GlcNAc...) asparagine glycosylation is found at N120 and N125. S141 carries the post-translational modification Phosphoserine. Residue K206 is modified to N6-acetyllysine. K295 is modified (N6-succinyllysine). N6-acetyllysine is present on K318. A Prevents secretion from ER motif is present at residues R414–L417.

This sequence belongs to the serpin family.

The protein resides in the endoplasmic reticulum lumen. In terms of biological role, binds specifically to collagen. Could be involved as a chaperone in the biosynthetic pathway of collagen. This is Serpin H1 (SERPINH1) from Pongo abelii (Sumatran orangutan).